The sequence spans 150 residues: Large ribosomal subunit protein bL9 (150 aa).

The protein belongs to the bacterial ribosomal protein bL9 family.

Functionally, binds to the 23S rRNA. This chain is Large ribosomal subunit protein bL9, found in Neisseria meningitidis serogroup A / serotype 4A (strain DSM 15465 / Z2491).